A 637-amino-acid polypeptide reads, in one-letter code: ATP-dependent zinc metalloprotease FtsH (637 aa).

Residues 1–6 are Cytoplasmic-facing; the sequence is MNNQGR. A helical membrane pass occupies residues 7 to 27; sequence SILAWATLFIFVILLFNVFQS. The Periplasmic segment spans residues 28 to 103; sequence DSLLGGRNNI…VVPLETRMNT (76 aa). A helical transmembrane segment spans residues 104–124; the sequence is FLGFLISWFPMLLLIGVWVFF. Residues 125–637 are Cytoplasmic-facing; it reads MRQMHGGGKA…TKAKKENYAS (513 aa). Position 195 to 202 (195 to 202) interacts with ATP; it reads GPPGTGKT. Position 417 (H417) interacts with Zn(2+). E418 is an active-site residue. The Zn(2+) site is built by H421 and D495. A disordered region spans residues 603–637; that stretch reads ENKFPFNDSSTIKIDKEKSPEKTKTTKAKKENYAS. The segment covering 615–637 has biased composition (basic and acidic residues); it reads KIDKEKSPEKTKTTKAKKENYAS.

This sequence in the central section; belongs to the AAA ATPase family. It in the C-terminal section; belongs to the peptidase M41 family. Homohexamer. It depends on Zn(2+) as a cofactor.

It localises to the cell inner membrane. In terms of biological role, acts as a processive, ATP-dependent zinc metallopeptidase for both cytoplasmic and membrane proteins. Plays a role in the quality control of integral membrane proteins. This is ATP-dependent zinc metalloprotease FtsH from Rickettsia conorii (strain ATCC VR-613 / Malish 7).